Reading from the N-terminus, the 104-residue chain is L-rhamnose mutarotase (104 aa).

Position 18 (Y18) interacts with substrate. H22 acts as the Proton donor in catalysis. Substrate-binding positions include Y41 and 76 to 77 (WW).

It belongs to the rhamnose mutarotase family. In terms of assembly, homodimer.

Its subcellular location is the cytoplasm. The catalysed reaction is alpha-L-rhamnose = beta-L-rhamnose. Its pathway is carbohydrate metabolism; L-rhamnose metabolism. Its function is as follows. Involved in the anomeric conversion of L-rhamnose. In Bacillus subtilis (strain 168), this protein is L-rhamnose mutarotase.